Reading from the N-terminus, the 106-residue chain is MNNILVEIGIENYIYLCVVLFCIGIFGVLYRRNAIIMFMSIEIMLNAVNLLFVAFSTFHQDAQGQVFVFFSMAVAAAEVAVGLAILVSIYRNLSSIDIDNLKNLKG.

The next 3 membrane-spanning stretches (helical) occupy residues 8 to 28, 35 to 55, and 66 to 86; these read IGIE…IFGV, IIMF…FVAF, and VFVF…LAIL.

It belongs to the complex I subunit 4L family. NDH-1 is composed of 14 different subunits. Subunits NuoA, H, J, K, L, M, N constitute the membrane sector of the complex.

It localises to the cell inner membrane. The enzyme catalyses a quinone + NADH + 5 H(+)(in) = a quinol + NAD(+) + 4 H(+)(out). In terms of biological role, NDH-1 shuttles electrons from NADH, via FMN and iron-sulfur (Fe-S) centers, to quinones in the respiratory chain. The immediate electron acceptor for the enzyme in this species is believed to be a menaquinone. Couples the redox reaction to proton translocation (for every two electrons transferred, four hydrogen ions are translocated across the cytoplasmic membrane), and thus conserves the redox energy in a proton gradient. The sequence is that of NADH-quinone oxidoreductase subunit K from Flavobacterium psychrophilum (strain ATCC 49511 / DSM 21280 / CIP 103535 / JIP02/86).